The chain runs to 327 residues: uncharacterized protein (327 aa).

In terms of domain architecture, S4 RNA-binding spans 12 to 79 (KRIDEFLAKE…LKKELDLEIE (68 aa)). Asp-136 is an active-site residue.

It belongs to the pseudouridine synthase RluA family.

The enzyme catalyses a uridine in RNA = a pseudouridine in RNA. This is an uncharacterized protein from Helicobacter pylori (strain J99 / ATCC 700824) (Campylobacter pylori J99).